The chain runs to 128 residues: Transcription antitermination protein NusB (128 aa).

Belongs to the NusB family.

Involved in transcription antitermination. Required for transcription of ribosomal RNA (rRNA) genes. Binds specifically to the boxA antiterminator sequence of the ribosomal RNA (rrn) operons. This chain is Transcription antitermination protein NusB, found in Listeria innocua serovar 6a (strain ATCC BAA-680 / CLIP 11262).